Here is a 1025-residue protein sequence, read N- to C-terminus: Adenylate-forming reductase 03009 (1025 aa).

The segment at 38–422 (FEFHAKSNPQ…LGRIDNQVKI (385 aa)) is adenylation (A) domain. Residues 332-333 (VT) and 412-415 (HLGR) each bind AMP. The thiolation and peptide carrier (T) domain stretch occupies residues 556 to 638 (SLGSTNTKIS…AILIWICVKK (83 aa)). Residues 682 to 900 (FIRRTAARVY…PPTKLWVKGV (219 aa)) form a thioester reductase (TR) domain region. NADP(+) contacts are provided by residues 685–688 (RTAA), 769–771 (SAL), and Tyr840.

Belongs to the adenylate-forming reductase family.

Its function is as follows. Adenylate-forming reductase, a natural product biosynthesis enzyme that resembles non-ribosomal peptide synthetases, yet serves to modify one substrate, rather than to condense two or more building blocks. The A-domain preferentially accepts L-serine, L-alanine and L-valine as substrates. The natural product of the enzyme is not yet known. The sequence is that of Adenylate-forming reductase 03009 from Coprinopsis cinerea (strain Okayama-7 / 130 / ATCC MYA-4618 / FGSC 9003) (Inky cap fungus).